A 71-amino-acid chain; its full sequence is Conotoxin Ca5.1 (71 aa).

Residues methionine 1–serine 19 form the signal peptide. The propeptide occupies aspartate 20–alanine 56.

The protein belongs to the conotoxin T superfamily. Contains 2 disulfide bonds that can be either 'C1-C3, C2-C4' or 'C1-C4, C2-C3', since these disulfide connectivities have been observed for conotoxins with cysteine framework V (for examples, see AC P0DQQ7 and AC P81755). In terms of tissue distribution, expressed by the venom duct.

It is found in the secreted. This chain is Conotoxin Ca5.1, found in Conus caracteristicus (Characteristic cone).